A 507-amino-acid chain; its full sequence is Probable cytosol aminopeptidase (507 aa).

Lys275 and Asp280 together coordinate Mn(2+). Lys287 is a catalytic residue. Asp298, Asp357, and Glu359 together coordinate Mn(2+). The active site involves Arg361.

The protein belongs to the peptidase M17 family. Mn(2+) serves as cofactor.

Its subcellular location is the cytoplasm. It catalyses the reaction Release of an N-terminal amino acid, Xaa-|-Yaa-, in which Xaa is preferably Leu, but may be other amino acids including Pro although not Arg or Lys, and Yaa may be Pro. Amino acid amides and methyl esters are also readily hydrolyzed, but rates on arylamides are exceedingly low.. It carries out the reaction Release of an N-terminal amino acid, preferentially leucine, but not glutamic or aspartic acids.. Presumably involved in the processing and regular turnover of intracellular proteins. Catalyzes the removal of unsubstituted N-terminal amino acids from various peptides. This is Probable cytosol aminopeptidase from Rhodopirellula baltica (strain DSM 10527 / NCIMB 13988 / SH1).